The primary structure comprises 231 residues: Ribosomal RNA large subunit methyltransferase E (231 aa).

5 residues coordinate S-adenosyl-L-methionine: glycine 76, tryptophan 78, aspartate 99, aspartate 115, and aspartate 139. Lysine 179 functions as the Proton acceptor in the catalytic mechanism.

It belongs to the class I-like SAM-binding methyltransferase superfamily. RNA methyltransferase RlmE family.

The protein localises to the cytoplasm. It catalyses the reaction uridine(2552) in 23S rRNA + S-adenosyl-L-methionine = 2'-O-methyluridine(2552) in 23S rRNA + S-adenosyl-L-homocysteine + H(+). In terms of biological role, specifically methylates the uridine in position 2552 of 23S rRNA at the 2'-O position of the ribose in the fully assembled 50S ribosomal subunit. This Bradyrhizobium sp. (strain ORS 278) protein is Ribosomal RNA large subunit methyltransferase E.